A 926-amino-acid chain; its full sequence is Bifunctional uridylyltransferase/uridylyl-removing enzyme (926 aa).

Positions 1–379 are uridylyltransferase; it reads MPVSFLSLAS…PKSRRSGASK (379 aa). Residues 380–736 form a uridylyl-removing region; that stretch reads QIDGFPVIQG…GHEMPAYDAT (357 aa). In terms of domain architecture, HD spans 496-618; it reads VDEHAIRALD…VKSPERLRLL (123 aa). 2 ACT domains span residues 737-814 and 849-926; these read MISL…IRSS and VIEV…ISEK.

Belongs to the GlnD family. Mg(2+) serves as cofactor.

It carries out the reaction [protein-PII]-L-tyrosine + UTP = [protein-PII]-uridylyl-L-tyrosine + diphosphate. The enzyme catalyses [protein-PII]-uridylyl-L-tyrosine + H2O = [protein-PII]-L-tyrosine + UMP + H(+). Uridylyltransferase (UTase) activity is inhibited by glutamine, while glutamine activates uridylyl-removing (UR) activity. Its function is as follows. Modifies, by uridylylation and deuridylylation, the PII regulatory proteins (GlnB and homologs), in response to the nitrogen status of the cell that GlnD senses through the glutamine level. Under low glutamine levels, catalyzes the conversion of the PII proteins and UTP to PII-UMP and PPi, while under higher glutamine levels, GlnD hydrolyzes PII-UMP to PII and UMP (deuridylylation). Thus, controls uridylylation state and activity of the PII proteins, and plays an important role in the regulation of nitrogen assimilation and metabolism. This Zymomonas mobilis subsp. mobilis (strain ATCC 31821 / ZM4 / CP4) protein is Bifunctional uridylyltransferase/uridylyl-removing enzyme.